Here is a 235-residue protein sequence, read N- to C-terminus: Ribonuclease PH (235 aa).

Phosphate contacts are provided by residues R86 and 124–126 (GTR).

This sequence belongs to the RNase PH family. As to quaternary structure, homohexameric ring arranged as a trimer of dimers.

The catalysed reaction is tRNA(n+1) + phosphate = tRNA(n) + a ribonucleoside 5'-diphosphate. Its function is as follows. Phosphorolytic 3'-5' exoribonuclease that plays an important role in tRNA 3'-end maturation. Removes nucleotide residues following the 3'-CCA terminus of tRNAs; can also add nucleotides to the ends of RNA molecules by using nucleoside diphosphates as substrates, but this may not be physiologically important. Probably plays a role in initiation of 16S rRNA degradation (leading to ribosome degradation) during starvation. This Francisella tularensis subsp. mediasiatica (strain FSC147) protein is Ribonuclease PH.